The chain runs to 122 residues: Large ribosomal subunit protein uL14 (122 aa).

It belongs to the universal ribosomal protein uL14 family. In terms of assembly, part of the 50S ribosomal subunit. Forms a cluster with proteins L3 and L19. In the 70S ribosome, L14 and L19 interact and together make contacts with the 16S rRNA in bridges B5 and B8.

In terms of biological role, binds to 23S rRNA. Forms part of two intersubunit bridges in the 70S ribosome. This chain is Large ribosomal subunit protein uL14, found in Azorhizobium caulinodans (strain ATCC 43989 / DSM 5975 / JCM 20966 / LMG 6465 / NBRC 14845 / NCIMB 13405 / ORS 571).